Here is a 159-residue protein sequence, read N- to C-terminus: Ribonuclease H (159 aa).

The region spanning 8–150 is the RNase H type-1 domain; it reads NLKEITMYTD…CDQLAVAAAK (143 aa). The Mg(2+) site is built by D17, E55, D77, and D142.

The protein belongs to the RNase H family. As to quaternary structure, monomer. Mg(2+) is required as a cofactor.

It is found in the cytoplasm. It catalyses the reaction Endonucleolytic cleavage to 5'-phosphomonoester.. Its function is as follows. Endonuclease that specifically degrades the RNA of RNA-DNA hybrids. The sequence is that of Ribonuclease H from Desulforamulus reducens (strain ATCC BAA-1160 / DSM 100696 / MI-1) (Desulfotomaculum reducens).